The primary structure comprises 318 residues: Apo-salmochelin esterase (318 aa).

A helical membrane pass occupies residues 13–32 (KAIFFHLSCLTLICSAQVYA). Active-site residues include S189 and H287.

Belongs to the esterase D family. Monomer.

It localises to the cell inner membrane. It catalyses the reaction enterobactin + H2O = N-(2,3-dihydroxybenzoyl)-L-serine trimer. It carries out the reaction monoglucosyl-enterobactin + H2O = [N-(2,3-dihydroxybenzoyl)-L-seryl]2-N-(C-5-[deoxy-beta-D-glucosyl]-2,3-dihydroxybenzoyl)-L-serine + H(+). The catalysed reaction is diglucosyl-enterobactin + H2O = N-(2,3-dihydroxybenzoyl)-L-seryl-[N-(C-5-[deoxy-beta-D-glucosyl]-2,3-dihydroxybenzoyl)-L-serine]2 + H(+). The enzyme catalyses triglucosyl-enterobactin + H2O = [N-(C-5-[deoxy-beta-D-glucosyl]-2,3-dihydroxybenzoyl)-L-serine]3 + H(+). Catalyzes the hydrolysis of both the apo and Fe3(+)-bound forms of enterobactin (Ent), monoglucosyl-C-Ent (MGE), diglucosyl-C-Ent (DGE) and triglucosyl-C-Ent (TGE). It prefers apo siderophores as substrates and hydrolyzes the Fe3(+)-bound siderophores very inefficiently. Tends to hydrolyze the trilactone just once to produce linearized trimers. May hydrolyze and linearize some or all of apo enterobactins while they are being exported. The protein is Apo-salmochelin esterase of Escherichia coli O6:H1 (strain CFT073 / ATCC 700928 / UPEC).